We begin with the raw amino-acid sequence, 293 residues long: Beta-lactamase (293 aa).

An N-terminal signal peptide occupies residues 1-27 (MRFTATVLSRVATGLALGLSMATASLA). Ser74 serves as the catalytic Acyl-ester intermediate. 238-240 (KSG) is a binding site for substrate.

This sequence belongs to the class-A beta-lactamase family.

The protein localises to the periplasm. The catalysed reaction is a beta-lactam + H2O = a substituted beta-amino acid. Hydrolyzes beta-lactams antibiotics. Rates of hydrolysis relative to benzylpenicillin =100: ampicillin = 27, carbenicillin = 25, cloxacillin = 0, cephaloridine = 4. This chain is Beta-lactamase, found in Rhodobacter capsulatus (Rhodopseudomonas capsulata).